Reading from the N-terminus, the 375-residue chain is Outer membrane porin OmpD (375 aa).

A signal peptide spans 1–34 (MRKHAKKIIRIIKMKLKLVAVAVTSLLAAGVVNA).

Belongs to the Gram-negative porin family. As to quaternary structure, homotrimer. Mixed heterotrimers with other porins are also probable.

The protein localises to the cell outer membrane. Its function is as follows. Forms pores that allow passive diffusion of small molecules across the outer membrane. The sequence is that of Outer membrane porin OmpD from Salmonella typhimurium (strain SL1344).